The chain runs to 394 residues: Probable malate--CoA ligase subunit beta (394 aa).

Residues 9 to 244 form the ATP-grasp domain; it reads KELLARHGVH…KSQEDPRETF (236 aa). ATP is bound by residues K46, E99, V102, and E107. 2 residues coordinate Mg(2+): N199 and D213.

This sequence belongs to the succinate/malate CoA ligase beta subunit family. In terms of assembly, heterotetramer of two alpha and two beta subunits. It depends on Mg(2+) as a cofactor.

It catalyses the reaction (S)-malate + ATP + CoA = (S)-malyl-CoA + ADP + phosphate. It participates in one-carbon metabolism; formaldehyde assimilation via serine pathway. This chain is Probable malate--CoA ligase subunit beta (mtkA), found in Mesorhizobium japonicum (strain LMG 29417 / CECT 9101 / MAFF 303099) (Mesorhizobium loti (strain MAFF 303099)).